Consider the following 259-residue polypeptide: Tumor necrosis factor receptor superfamily member 10C (259 aa).

The first 25 residues, 1 to 25 (MARIPKTLKFVVVIVAVLLPVLAYS), serve as a signal peptide directing secretion. 3 TNFR-Cys repeats span residues 29–66 (ARQEEVPQQTVAPQQQRHSFKGEECPAGSHRSEHTGAC), 69–109 (CTEG…DTVC), and 110–149 (QCKEGTFRNENSPEMCRKCSRCPSGEVQVSNCTSWDDIQC). Positions 30–45 (RQEEVPQQTVAPQQQR) are enriched in polar residues. The interval 30–56 (RQEEVPQQTVAPQQQRHSFKGEECPAG) is disordered. Intrachain disulfides connect Cys53–Cys66, Cys69–Cys85, Cys88–Cys101, Cys91–Cys109, Cys111–Cys125, Cys128–Cys141, and Cys131–Cys149. A glycan (N-linked (GlcNAc...) (high mannose) asparagine) is linked at Asn77. N-linked (GlcNAc...) (high mannose) asparagine glycans are attached at residues Asn140 and Asn156. The segment at 160 to 224 (ETPAAEETMN…TSPGTPAPAA (65 aa)) is disordered. TAPE repeat units lie at residues 162–176 (PAAEETMNTSPGTPA), 177–191 (PAAEETMNTSPGTPA), 192–206 (PAAEETMTTSPGTPA), 207–221 (PAAEETMTTSPGTPA), and 222–236 (PAAEETMITSPGTPA). Low complexity predominate over residues 185–217 (TSPGTPAPAAEETMTTSPGTPAPAAEETMTTSP). Residue Ala236 is the site of GPI-anchor amidated alanine attachment. The propeptide at 237 to 259 (SSHYLSCTIVGIIVLIVLLIVFV) is removed in mature form.

Post-translationally, N-glycosylated and O-glycosylated. As to expression, higher expression in normal tissues than in tumor cell lines. Highly expressed in peripheral blood lymphocytes, spleen, skeletal muscle, placenta, lung and heart.

The protein localises to the cell membrane. Its function is as follows. Receptor for the cytotoxic ligand TRAIL. Lacks a cytoplasmic death domain and hence is not capable of inducing apoptosis. May protect cells against TRAIL mediated apoptosis by competing with TRAIL-R1 and R2 for binding to the ligand. The polypeptide is Tumor necrosis factor receptor superfamily member 10C (TNFRSF10C) (Homo sapiens (Human)).